The primary structure comprises 67 residues: UPF0435 protein SSP0913 (67 aa).

This sequence belongs to the UPF0435 family.

This Staphylococcus saprophyticus subsp. saprophyticus (strain ATCC 15305 / DSM 20229 / NCIMB 8711 / NCTC 7292 / S-41) protein is UPF0435 protein SSP0913.